Reading from the N-terminus, the 192-residue chain is Ion-translocating oxidoreductase complex subunit B (192 aa).

Positions 1–26 (MNAIWIAVAAVSLLGLAFGAILGYAS) are hydrophobic. The 60-residue stretch at 32–91 (EDDPVVEKIDEILPQSQCGQCGYPGCRPYAETISCNGEKINRCAPGGEAVMLKIAELLNV) folds into the 4Fe-4S domain. Residues cysteine 49, cysteine 52, cysteine 57, cysteine 74, cysteine 117, cysteine 120, cysteine 123, cysteine 127, cysteine 147, cysteine 150, cysteine 153, and cysteine 157 each coordinate [4Fe-4S] cluster. 2 consecutive 4Fe-4S ferredoxin-type domains span residues 108 to 137 (MVAV…GATR) and 138 to 167 (AMHT…LQPV).

It belongs to the 4Fe4S bacterial-type ferredoxin family. RnfB subfamily. In terms of assembly, the complex is composed of six subunits: RsxA, RsxB, RsxC, RsxD, RsxE and RsxG. It depends on [4Fe-4S] cluster as a cofactor.

The protein resides in the cell inner membrane. In terms of biological role, part of a membrane-bound complex that couples electron transfer with translocation of ions across the membrane. Required to maintain the reduced state of SoxR. The protein is Ion-translocating oxidoreductase complex subunit B of Escherichia coli O6:K15:H31 (strain 536 / UPEC).